The following is a 162-amino-acid chain: UPF0305 protein MMP0665 (162 aa).

It belongs to the UPF0305 family.

The protein is UPF0305 protein MMP0665 of Methanococcus maripaludis (strain DSM 14266 / JCM 13030 / NBRC 101832 / S2 / LL).